Here is a 21-residue protein sequence, read N- to C-terminus: Magainin-B1 (21 aa).

In terms of tissue distribution, expressed by the skin glands.

It is found in the secreted. In terms of biological role, has no antimicrobial activity against tested bacteria. The polypeptide is Magainin-B1 (Xenopus borealis (Kenyan clawed frog)).